Here is a 224-residue protein sequence, read N- to C-terminus: Serum amyloid P-component (224 aa).

A signal peptide spans 1 to 19; that stretch reads MNKLMSWVSVLIILPEAFA. One can recognise a Pentraxin (PTX) domain in the interval 24 to 224; sequence RGKVFVFPRE…YVIVKPMVWG (201 aa). N-linked (GlcNAc...) asparagine glycosylation occurs at N51. A disulfide bridge links C55 with C114. Positions 77, 78, 155, 156, and 157 each coordinate Ca(2+). An N-linked (GlcNAc...) asparagine glycan is attached at N166. Ca(2+) is bound at residue Q167.

The protein belongs to the pentraxin family. As to quaternary structure, homopentamer. Pentraxin (or pentaxin) have a discoid arrangement of 5 non-covalently bound subunits. Requires Ca(2+) as cofactor.

It is found in the secreted. The protein is Serum amyloid P-component (APCS) of Bos taurus (Bovine).